The following is a 249-amino-acid chain: Pyridoxine 5'-phosphate synthase (249 aa).

Asn-7 lines the 3-amino-2-oxopropyl phosphate pocket. 9-10 (DH) contacts 1-deoxy-D-xylulose 5-phosphate. Position 18 (Arg-18) interacts with 3-amino-2-oxopropyl phosphate. The Proton acceptor role is filled by His-43. 1-deoxy-D-xylulose 5-phosphate-binding residues include Arg-45 and His-50. Glu-70 serves as the catalytic Proton acceptor. Thr-100 serves as a coordination point for 1-deoxy-D-xylulose 5-phosphate. Residue His-190 is the Proton donor of the active site. Residues Gly-191 and 212 to 213 (GH) contribute to the 3-amino-2-oxopropyl phosphate site.

The protein belongs to the PNP synthase family. As to quaternary structure, homooctamer; tetramer of dimers.

Its subcellular location is the cytoplasm. The catalysed reaction is 3-amino-2-oxopropyl phosphate + 1-deoxy-D-xylulose 5-phosphate = pyridoxine 5'-phosphate + phosphate + 2 H2O + H(+). It participates in cofactor biosynthesis; pyridoxine 5'-phosphate biosynthesis; pyridoxine 5'-phosphate from D-erythrose 4-phosphate: step 5/5. Catalyzes the complicated ring closure reaction between the two acyclic compounds 1-deoxy-D-xylulose-5-phosphate (DXP) and 3-amino-2-oxopropyl phosphate (1-amino-acetone-3-phosphate or AAP) to form pyridoxine 5'-phosphate (PNP) and inorganic phosphate. This chain is Pyridoxine 5'-phosphate synthase, found in Synechococcus sp. (strain CC9902).